The following is a 389-amino-acid chain: Methane monooxygenase component A beta chain (389 aa).

M.capsulatus has two forms of methane monooxygenase, a soluble and a membrane-bound type. The soluble type consists of four components (A to D): protein A, comprising three chains, in an alpha-2, beta-2, gamma-2 configuration, is a nonheme iron protein containing an unusual mu-hydroxo bridge structure at its active site and interacts with both oxygen and methane.

The enzyme catalyses methane + NADH + O2 + H(+) = methanol + NAD(+) + H2O. The catalysed reaction is methane + NADPH + O2 + H(+) = methanol + NADP(+) + H2O. In terms of biological role, responsible for the initial oxygenation of methane to methanol in methanotrophs. It also catalyzes the monohydroxylation of a variety of unactivated alkenes, alicyclic, aromatic and heterocyclic compounds. The polypeptide is Methane monooxygenase component A beta chain (mmoY) (Methylococcus capsulatus (strain ATCC 33009 / NCIMB 11132 / Bath)).